Here is a 149-residue protein sequence, read N- to C-terminus: YbbR-like domain-containing protein in def 5'region (149 aa).

The YbbR-like domain maps to 1–68; it reads IPVEVLAQGA…LRPNRVRVVE (68 aa).

The protein is YbbR-like domain-containing protein in def 5'region of Thermus thermophilus.